Reading from the N-terminus, the 326-residue chain is Protein spaetzle (326 aa).

A signal peptide spans 1–25; it reads MMTPMWISLFKVLLLLFAFFATYEA. Residue N48 is glycosylated (N-linked (GlcNAc...) asparagine). Positions 56–82 are disordered; that stretch reads FMPIPTQHDDPTQKQKQNQNQSPIPET. Positions 69–80 are enriched in polar residues; it reads KQKQNQNQSPIP. N-linked (GlcNAc...) asparagine glycans are attached at residues N114 and N164. The interval 152-174 is disordered; sequence YRPPQSPARPLRNDTKEHNPCAK. A compositionally biased stretch (basic and acidic residues) spans 162–174; that stretch reads LRNDTKEHNPCAK. The region spanning 228-322 is the Spaetzle domain; the sequence is FLCRSIRKLV…FKIPSCCKCA (95 aa). Disulfide bonds link C230/C288, C267/C319, and C274/C321.

Homodimer; disulfide-linked. In the presence of Tl, crystal structures show one Tl molecule bound to a spaetzle C-106 homodimer. However, the active complex probably consists of two Tl molecules bound to a spaetzle C-106 homodimer. This is supported by in vitro experiments which also show binding of the spaetzle C-106 dimer to 2 Tl receptors. Ligand binding induces conformational changes in the extracellular domain of Tl. This may enable a secondary homodimerization interface at the C-terminus of the Tl extracellular domain. During embryonic development proteolytically processed by activated ea/easter; ea cleaves the signal peptide and also generates the C-terminal 12 kDa active ligand for the Toll receptor, C-106 (except for isoform 8.24 and isoform 11.27 as they do not contain the cleavage site). During the immune response, cleaved in the same manner by SPE. Post-translationally, extracellular forms of isoform 8.19 and isoform 11.7 are glycosylated.

Its subcellular location is the secreted. In terms of biological role, the activated form, spaetzle C-106, acts as a ligand for the Toll receptor. Binding to Toll activates the Toll signaling pathway and induces expression of the antifungal peptide drosomycin. Component of the extracellular signaling pathway that establishes dorsal-ventral polarity in the embryo. This is Protein spaetzle from Drosophila melanogaster (Fruit fly).